The primary structure comprises 607 residues: MPNETLQNQIASLPENPGVYLMKNAQGEIIYVGKAAVLKDRVKSYFVPPSRLTPKTCQLVSQINELEYLITGSEQEALILELNLIKRHRPYFNVRLKDDKGFPYLKITLNEKWPRIYITRSMADDGGRYFGPFANTRSVRHTLQVLKELFRFRSCNRTEPEKRSRPCLEYDIHQCLSPCTGKISKSDYDHLISQAILFLEGKQDQVLKLLIRLMNEASARLDYETAALRRDQIASIKEVIEGQQLAARVTGEQDAIAFAQEGDLSMVQVFFIRRGKLIGRESFCLQGTREEKPGDILSEFAKQFYHSSTQIPPKIVTQYPVSDREILEKWLSQRRGDKVHITAGLRGQPKELINIVAENAREQLKQARIKNLSSSVTLTDALAELQTALGLSLPPQRIEGYDISNIQGTNAVGSMVVFENGKPQKAHYRRFRIKTVKGADDFSMLKEVISRRFGRVHREDAGESFARLPSLMLIDGGKGQLSSVKETLDKLGLEGQAVIGLAKEFEEIYLPHKSEPIRLAANSPALQLLQRVRDEAHRFALGYHLHIRQKSGLTSALDGIPGVGPSRRRLLIKTFGSVAGIRQASFEKLSQVKGINQALALSIKELL.

Residues E15 to V94 form the GIY-YIG domain. The UVR domain occupies D204–V239.

The protein belongs to the UvrC family. As to quaternary structure, interacts with UvrB in an incision complex.

It is found in the cytoplasm. Functionally, the UvrABC repair system catalyzes the recognition and processing of DNA lesions. UvrC both incises the 5' and 3' sides of the lesion. The N-terminal half is responsible for the 3' incision and the C-terminal half is responsible for the 5' incision. In Dehalococcoides mccartyi (strain ATCC BAA-2100 / JCM 16839 / KCTC 5957 / BAV1), this protein is UvrABC system protein C.